The chain runs to 163 residues: Succinate dehydrogenase assembly factor 2-B, mitochondrial (163 aa).

Residues 1–23 constitute a mitochondrion transit peptide; that stretch reads MFRQLRLTMDISGWIFMPWRRSL.

It belongs to the SDHAF2 family. As to quaternary structure, interacts with the flavoprotein subunit within the SDH catalytic dimer.

It is found in the mitochondrion matrix. Its function is as follows. Plays an essential role in the assembly of succinate dehydrogenase (SDH), an enzyme complex (also referred to as respiratory complex II) that is a component of both the tricarboxylic acid (TCA) cycle and the mitochondrial electron transport chain, and which couples the oxidation of succinate to fumarate with the reduction of ubiquinone (coenzyme Q) to ubiquinol. Required for flavinylation (covalent attachment of FAD) of the flavoprotein subunit of the SDH catalytic dimer. This chain is Succinate dehydrogenase assembly factor 2-B, mitochondrial, found in Drosophila ananassae (Fruit fly).